The primary structure comprises 552 residues: FERRY endosomal RAB5 effector complex subunit 3 (552 aa).

Residues 383–403 (LKESLDSGNQNGGNDDKTKNA) are disordered.

In terms of assembly, component of the FERRY complex composed of five subunits, TBCK, PPP1R21, FERRY3, CRYZL1 and GATD1 with a ratio of 1:2:1:2:4, respectively.

The protein resides in the cytoplasm. Its subcellular location is the early endosome. Its function is as follows. Component of the FERRY complex (Five-subunit Endosomal Rab5 and RNA/ribosome intermediary). The FERRY complex directly interacts with mRNAs and RAB5A, and functions as a RAB5A effector involved in the localization and the distribution of specific mRNAs most likely by mediating their endosomal transport. The complex recruits mRNAs and ribosomes to early endosomes through direct mRNA-interaction. Plays a role in mast cell degranulation. This chain is FERRY endosomal RAB5 effector complex subunit 3, found in Pongo abelii (Sumatran orangutan).